The following is a 612-amino-acid chain: Dihydroxy-acid dehydratase (612 aa).

Aspartate 81 is a binding site for Mg(2+). Cysteine 122 provides a ligand contact to [2Fe-2S] cluster. Mg(2+)-binding residues include aspartate 123 and lysine 124. Lysine 124 is subject to N6-carboxylysine. Residue cysteine 195 participates in [2Fe-2S] cluster binding. Glutamate 491 is a binding site for Mg(2+). The active-site Proton acceptor is the serine 517.

Belongs to the IlvD/Edd family. Homodimer. [2Fe-2S] cluster is required as a cofactor. Mg(2+) serves as cofactor.

The enzyme catalyses (2R)-2,3-dihydroxy-3-methylbutanoate = 3-methyl-2-oxobutanoate + H2O. It catalyses the reaction (2R,3R)-2,3-dihydroxy-3-methylpentanoate = (S)-3-methyl-2-oxopentanoate + H2O. It participates in amino-acid biosynthesis; L-isoleucine biosynthesis; L-isoleucine from 2-oxobutanoate: step 3/4. It functions in the pathway amino-acid biosynthesis; L-valine biosynthesis; L-valine from pyruvate: step 3/4. Functions in the biosynthesis of branched-chain amino acids. Catalyzes the dehydration of (2R,3R)-2,3-dihydroxy-3-methylpentanoate (2,3-dihydroxy-3-methylvalerate) into 2-oxo-3-methylpentanoate (2-oxo-3-methylvalerate) and of (2R)-2,3-dihydroxy-3-methylbutanoate (2,3-dihydroxyisovalerate) into 2-oxo-3-methylbutanoate (2-oxoisovalerate), the penultimate precursor to L-isoleucine and L-valine, respectively. The sequence is that of Dihydroxy-acid dehydratase from Buchnera aphidicola subsp. Baizongia pistaciae (strain Bp).